A 625-amino-acid polypeptide reads, in one-letter code: DNA-directed RNA polymerase subunit gamma (625 aa).

Positions 71, 73, 86, and 89 each coordinate Zn(2+). Residues D467, D469, and D471 each contribute to the Mg(2+) site.

Belongs to the RNA polymerase beta' chain family. RpoC1 subfamily. As to quaternary structure, in cyanobacteria the RNAP catalytic core is composed of 2 alpha, 1 beta, 1 beta', 1 gamma and 1 omega subunit. When a sigma factor is associated with the core the holoenzyme is formed, which can initiate transcription. Mg(2+) serves as cofactor. Zn(2+) is required as a cofactor.

The catalysed reaction is RNA(n) + a ribonucleoside 5'-triphosphate = RNA(n+1) + diphosphate. Functionally, DNA-dependent RNA polymerase catalyzes the transcription of DNA into RNA using the four ribonucleoside triphosphates as substrates. The polypeptide is DNA-directed RNA polymerase subunit gamma (Nostoc punctiforme (strain ATCC 29133 / PCC 73102)).